We begin with the raw amino-acid sequence, 111 residues long: MAVKIRLARGGAKKRPFYRVVVANATAPRDGDFLEKVGTYNPMLASDNSERVVLKKDRIEYWLGTGAKPTERVAKFIEQAGVTLPEKVKKEMEVKAKNRKVRPSKKEAKEA.

Belongs to the bacterial ribosomal protein bS16 family.

The protein is Small ribosomal subunit protein bS16 of Rickettsia felis (strain ATCC VR-1525 / URRWXCal2) (Rickettsia azadi).